Reading from the N-terminus, the 217-residue chain is Small ribosomal subunit protein uS3 (217 aa).

The region spanning 38 to 106 is the KH type-2 domain; that stretch reads IRQLIQTKLA…QVHINIVEIK (69 aa).

Belongs to the universal ribosomal protein uS3 family. In terms of assembly, part of the 30S ribosomal subunit. Forms a tight complex with proteins S10 and S14.

Functionally, binds the lower part of the 30S subunit head. Binds mRNA in the 70S ribosome, positioning it for translation. In Lactococcus lactis subsp. cremoris (strain MG1363), this protein is Small ribosomal subunit protein uS3.